We begin with the raw amino-acid sequence, 459 residues long: 2-(3-amino-3-carboxypropyl)histidine synthase subunit 1 (459 aa).

The disordered stretch occupies residues 1–68; sequence MEDDRAQVDL…AGANTSIEDS (68 aa). A compositionally biased stretch (low complexity) spans 41-61; the sequence is SAAAGKSSSSSSNSTSQPAGA. The [4Fe-4S] cluster site is built by cysteine 165, cysteine 268, and cysteine 403.

It belongs to the DPH1/DPH2 family. DPH1 subfamily. In terms of assembly, component of the 2-(3-amino-3-carboxypropyl)histidine synthase complex composed of dph-1, dph-2, dph-3 and a NADH-dependent reductase, predominantly cbr-1. The cofactor is [4Fe-4S] cluster.

It is found in the cytoplasm. It catalyses the reaction L-histidyl-[translation elongation factor 2] + S-adenosyl-L-methionine = 2-[(3S)-amino-3-carboxypropyl]-L-histidyl-[translation elongation factor 2] + S-methyl-5'-thioadenosine + H(+). It participates in protein modification; peptidyl-diphthamide biosynthesis. In terms of biological role, catalyzes the first step of diphthamide biosynthesis, a post-translational modification of histidine which occurs in elongation factor 2. Dph-1 and dph-2 transfer a 3-amino-3-carboxypropyl (ACP) group from S-adenosyl-L-methionine (SAM) to a histidine residue, the reaction is assisted by a reduction system comprising dph-3 and a NADH-dependent reductase, predominantly cbr-1. This chain is 2-(3-amino-3-carboxypropyl)histidine synthase subunit 1 (dph-1), found in Neurospora crassa (strain ATCC 24698 / 74-OR23-1A / CBS 708.71 / DSM 1257 / FGSC 987).